The chain runs to 487 residues: Cobyric acid synthase (487 aa).

The 188-residue stretch at Val-248–Ser-435 folds into the GATase cobBQ-type domain. The Nucleophile role is filled by Cys-329. His-427 is a catalytic residue.

The protein belongs to the CobB/CobQ family. CobQ subfamily.

It functions in the pathway cofactor biosynthesis; adenosylcobalamin biosynthesis. Its function is as follows. Catalyzes amidations at positions B, D, E, and G on adenosylcobyrinic A,C-diamide. NH(2) groups are provided by glutamine, and one molecule of ATP is hydrogenolyzed for each amidation. The sequence is that of Cobyric acid synthase from Pseudomonas entomophila (strain L48).